Here is a 749-residue protein sequence, read N- to C-terminus: MKYAASGLLSVALNSLLLLGSNQRFATQDVAPVWRGIAFGQSTDVNFATNVLPEKVGVNDVTINGKKLTVNDKADLSAPITIESRGGKIANTHDGLTFFYTQLPANVNFTLQSDVTVEQFGPESDAKPNAQEGAGLLVRDILGVPRQEPLKEGYEEFPAASNMVMNAIMTQDKKSKTEVKMQLISRNGVTQPWGNTNAEITRTSYQEKINLEQTPTFRLKLERTNDGFITAYAPKGSDQWVSKTVKGADLVTHQDKDHYYVGFFASRNAKITISNASLTTSPANTKPSAPFKAETTAPLLQVASSSLSTSDTYPVQARVNYNGTVEVFQNGKSLGKPQRVRAGDDFSLTTRLTQQKSDFKLVYIPSEGEDKTAKETSFSVEKITLADARNLYVSPEGKAGNDGSKNAPLDIKTAINALPGGGTLWLMDGDYSATVIPVSATQRKGMKTLMPVGKKAVFHGLQLNASYWKVKGIEITEKSFRIEGSHNQIERLLAHHCDNTGIQVSSSDNVGRPLWASHNLILNSESHSNQHPSKKDADGFAVKMRVGEGNVIRGAFSHDNVDDGFDLFNKIEDGPNGAVMIENSISLNNTSNGFKLGGEGQPVAHQVKNSIAIGNHMDGFSDNFNPGALQVSNNIALDNVRFNFIFRPSPYYGYEKQGIFKNNVSLRTQPGKYDDAVVGRLDASNYFIRIIERSTVRVRKSRRRITNPSRCQRSSAGMKKAACNWVIFCRRSNRHKTQRHRNRYPSTPA.

The first 26 residues, M1–A26, serve as a signal peptide directing secretion. Residues D538, D562, D563, and D566 each coordinate Ca(2+). Residue K595 is the Proton acceptor of the active site.

Belongs to the polysaccharide lyase 9 family. It depends on Ca(2+) as a cofactor.

It is found in the secreted. It carries out the reaction [(1-&gt;4)-alpha-D-galacturonosyl](n) = 4-(4-deoxy-alpha-D-galact-4-enuronosyl)-D-galacturonate + [(1-&gt;4)-alpha-D-galacturonosyl](n-2). Activity on pectate is nearly completely inhibited by ethyleneglycol-bis-(P-aminoethyl ether) N,N'-tetraacetic acid (EGTA), EDTA or nitrilotriacetic acid. Activity is specifically restored by the addition of Ca(2+). Exo-cleaving lyase that catalyzes the digestion of pectate. Contributes to pectate catabolism but not to bacterial virulence. In vitro can also use citrus pectin and highly methyl-esterified Link pectin as substrates. This Dickeya chrysanthemi (Pectobacterium chrysanthemi) protein is Pectate disaccharide-lyase.